Reading from the N-terminus, the 438-residue chain is Citrate synthase (438 aa).

Catalysis depends on residues histidine 306 and aspartate 364.

Belongs to the citrate synthase family.

The enzyme catalyses oxaloacetate + acetyl-CoA + H2O = citrate + CoA + H(+). The protein operates within carbohydrate metabolism; tricarboxylic acid cycle; isocitrate from oxaloacetate: step 1/2. The protein is Citrate synthase (gltA) of Bartonella quintana (strain Toulouse) (Rochalimaea quintana).